We begin with the raw amino-acid sequence, 106 residues long: Small ribosomal subunit protein uS10 (106 aa).

Belongs to the universal ribosomal protein uS10 family. Part of the 30S ribosomal subunit.

Its function is as follows. Involved in the binding of tRNA to the ribosomes. The polypeptide is Small ribosomal subunit protein uS10 (Wolbachia pipientis subsp. Culex pipiens (strain wPip)).